Reading from the N-terminus, the 305-residue chain is GTP cyclohydrolase FolE2 (305 aa).

The protein belongs to the GTP cyclohydrolase IV family.

It catalyses the reaction GTP + H2O = 7,8-dihydroneopterin 3'-triphosphate + formate + H(+). The protein operates within cofactor biosynthesis; 7,8-dihydroneopterin triphosphate biosynthesis; 7,8-dihydroneopterin triphosphate from GTP: step 1/1. Its function is as follows. Converts GTP to 7,8-dihydroneopterin triphosphate. The polypeptide is GTP cyclohydrolase FolE2 (Xanthomonas euvesicatoria pv. vesicatoria (strain 85-10) (Xanthomonas campestris pv. vesicatoria)).